The chain runs to 463 residues: Argininosuccinate lyase (463 aa).

Belongs to the lyase 1 family. Argininosuccinate lyase subfamily.

Its subcellular location is the cytoplasm. It catalyses the reaction 2-(N(omega)-L-arginino)succinate = fumarate + L-arginine. The protein operates within amino-acid biosynthesis; L-arginine biosynthesis; L-arginine from L-ornithine and carbamoyl phosphate: step 3/3. The polypeptide is Argininosuccinate lyase (Ruegeria pomeroyi (strain ATCC 700808 / DSM 15171 / DSS-3) (Silicibacter pomeroyi)).